The sequence spans 267 residues: Probable ribose-5-phosphate isomerase 1 (267 aa).

Position 2 is an N-acetylglycine (G2). The residue at position 92 (S92) is a Phosphoserine.

Belongs to the ribose 5-phosphate isomerase family. In terms of tissue distribution, expressed in roots, cotyledons, leaves and flowers.

Its subcellular location is the cytoplasm. The catalysed reaction is aldehydo-D-ribose 5-phosphate = D-ribulose 5-phosphate. It functions in the pathway carbohydrate degradation; pentose phosphate pathway; D-ribose 5-phosphate from D-ribulose 5-phosphate (non-oxidative stage): step 1/1. Functionally, catalyzes the reversible conversion of ribose-5-phosphate to ribulose 5-phosphate. This chain is Probable ribose-5-phosphate isomerase 1 (RPI1), found in Arabidopsis thaliana (Mouse-ear cress).